Here is a 172-residue protein sequence, read N- to C-terminus: MDRAQKEKLVDELGQIFESSGVVVVAHYAGLTVAEMQDFRARMREAGGSVRVAKNRLAKIALQGKPNEKIGELLTGMTVLAYSEDPVAAAKVADAYAKDNSKYQILGGAMGEDYLDQAGVKAVASMPSREELIAQIASCIGAPASNIAGAIGAPASNIASILSTIEEKAEAA.

This sequence belongs to the universal ribosomal protein uL10 family. In terms of assembly, part of the ribosomal stalk of the 50S ribosomal subunit. The N-terminus interacts with L11 and the large rRNA to form the base of the stalk. The C-terminus forms an elongated spine to which L12 dimers bind in a sequential fashion forming a multimeric L10(L12)X complex.

In terms of biological role, forms part of the ribosomal stalk, playing a central role in the interaction of the ribosome with GTP-bound translation factors. This is Large ribosomal subunit protein uL10 from Dinoroseobacter shibae (strain DSM 16493 / NCIMB 14021 / DFL 12).